We begin with the raw amino-acid sequence, 454 residues long: Bifunctional protein GlmU (454 aa).

A pyrophosphorylase region spans residues Met1–Lys240. Residues Leu8–Gly11, Lys22, and Gly87–Thr88 each bind UDP-N-acetyl-alpha-D-glucosamine. Asp119 is a binding site for Mg(2+). The UDP-N-acetyl-alpha-D-glucosamine site is built by Gly152, Glu166, Asn181, and Asn238. Mg(2+) is bound at residue Asn238. The linker stretch occupies residues Ile241 to Gln261. The interval Gly262–Gln454 is N-acetyltransferase. UDP-N-acetyl-alpha-D-glucosamine-binding residues include Arg325 and Lys342. Residue His353 is the Proton acceptor of the active site. Tyr356 and Asn367 together coordinate UDP-N-acetyl-alpha-D-glucosamine. Acetyl-CoA is bound by residues Ala370, Asn376–Tyr377, Ser395, Ala413, and Arg430.

The protein in the N-terminal section; belongs to the N-acetylglucosamine-1-phosphate uridyltransferase family. This sequence in the C-terminal section; belongs to the transferase hexapeptide repeat family. In terms of assembly, homotrimer. The cofactor is Mg(2+).

It localises to the cytoplasm. The catalysed reaction is alpha-D-glucosamine 1-phosphate + acetyl-CoA = N-acetyl-alpha-D-glucosamine 1-phosphate + CoA + H(+). It carries out the reaction N-acetyl-alpha-D-glucosamine 1-phosphate + UTP + H(+) = UDP-N-acetyl-alpha-D-glucosamine + diphosphate. The protein operates within nucleotide-sugar biosynthesis; UDP-N-acetyl-alpha-D-glucosamine biosynthesis; N-acetyl-alpha-D-glucosamine 1-phosphate from alpha-D-glucosamine 6-phosphate (route II): step 2/2. It functions in the pathway nucleotide-sugar biosynthesis; UDP-N-acetyl-alpha-D-glucosamine biosynthesis; UDP-N-acetyl-alpha-D-glucosamine from N-acetyl-alpha-D-glucosamine 1-phosphate: step 1/1. Its pathway is bacterial outer membrane biogenesis; LPS lipid A biosynthesis. Functionally, catalyzes the last two sequential reactions in the de novo biosynthetic pathway for UDP-N-acetylglucosamine (UDP-GlcNAc). The C-terminal domain catalyzes the transfer of acetyl group from acetyl coenzyme A to glucosamine-1-phosphate (GlcN-1-P) to produce N-acetylglucosamine-1-phosphate (GlcNAc-1-P), which is converted into UDP-GlcNAc by the transfer of uridine 5-monophosphate (from uridine 5-triphosphate), a reaction catalyzed by the N-terminal domain. The polypeptide is Bifunctional protein GlmU (Helicobacter hepaticus (strain ATCC 51449 / 3B1)).